Reading from the N-terminus, the 243-residue chain is Thaumatin-like protein (243 aa).

The signal sequence occupies residues 1–20 (MASINLFLFAFLLLLSHASA). Cystine bridges form between Cys-29/Cys-238, Cys-77/Cys-87, Cys-92/Cys-98, Cys-144/Cys-228, Cys-149/Cys-211, Cys-157/Cys-174, Cys-178/Cys-187, and Cys-188/Cys-198.

This sequence belongs to the thaumatin family.

The chain is Thaumatin-like protein from Arabidopsis thaliana (Mouse-ear cress).